The sequence spans 208 residues: Imidazoleglycerol-phosphate dehydratase (208 aa).

Residues 1–22 (MTRRAAVKAPRAGAAARRGSVA) form a disordered region. Positions 7–19 (VKAPRAGAAARRG) are enriched in low complexity.

The protein belongs to the imidazoleglycerol-phosphate dehydratase family.

Its subcellular location is the cytoplasm. It catalyses the reaction D-erythro-1-(imidazol-4-yl)glycerol 3-phosphate = 3-(imidazol-4-yl)-2-oxopropyl phosphate + H2O. Its pathway is amino-acid biosynthesis; L-histidine biosynthesis; L-histidine from 5-phospho-alpha-D-ribose 1-diphosphate: step 6/9. The chain is Imidazoleglycerol-phosphate dehydratase from Anaeromyxobacter dehalogenans (strain 2CP-C).